A 234-amino-acid chain; its full sequence is Leucyl/phenylalanyl-tRNA--protein transferase (234 aa).

This sequence belongs to the L/F-transferase family.

The protein localises to the cytoplasm. It carries out the reaction N-terminal L-lysyl-[protein] + L-leucyl-tRNA(Leu) = N-terminal L-leucyl-L-lysyl-[protein] + tRNA(Leu) + H(+). It catalyses the reaction N-terminal L-arginyl-[protein] + L-leucyl-tRNA(Leu) = N-terminal L-leucyl-L-arginyl-[protein] + tRNA(Leu) + H(+). The catalysed reaction is L-phenylalanyl-tRNA(Phe) + an N-terminal L-alpha-aminoacyl-[protein] = an N-terminal L-phenylalanyl-L-alpha-aminoacyl-[protein] + tRNA(Phe). Its function is as follows. Functions in the N-end rule pathway of protein degradation where it conjugates Leu, Phe and, less efficiently, Met from aminoacyl-tRNAs to the N-termini of proteins containing an N-terminal arginine or lysine. In Salmonella arizonae (strain ATCC BAA-731 / CDC346-86 / RSK2980), this protein is Leucyl/phenylalanyl-tRNA--protein transferase.